The primary structure comprises 451 residues: Lipase member H (451 aa).

Residues 1 to 16 form the signal peptide; that stretch reads MLRLCFLLSFMCLVKS. An N-linked (GlcNAc...) asparagine glycan is attached at Asn-66. Ser-154 acts as the Nucleophile in catalysis. Asp-178 (charge relay system) is an active-site residue. A disulfide bridge connects residues Cys-233 and Cys-246. Catalysis depends on His-248, which acts as the Charge relay system. 3 disulfides stabilise this stretch: Cys-270-Cys-281, Cys-284-Cys-292, and Cys-427-Cys-446.

This sequence belongs to the AB hydrolase superfamily. Lipase family. In terms of assembly, interacts with TTMP/C3orf52.

Its subcellular location is the secreted. It localises to the cell membrane. The catalysed reaction is 1-hexadecanoyl-2-(9Z-octadecenoyl)-sn-glycero-3-phosphate + H2O = 2-(9Z-octadecenoyl)-sn-glycero-3-phosphate + hexadecanoate + H(+). Hydrolyzes specifically phosphatidic acid (PA) to produce 2-acyl lysophosphatidic acid (LPA; a potent bioactive lipid mediator) and fatty acid. Does not hydrolyze other phospholipids, like phosphatidylserine (PS), phosphatidylcholine (PC) and phosphatidylethanolamine (PE) or triacylglycerol (TG). The protein is Lipase member H (Liph) of Rattus norvegicus (Rat).